Reading from the N-terminus, the 409-residue chain is Elongation factor Tu, chloroplastic (409 aa).

Positions 10–214 constitute a tr-type G domain; that stretch reads KPHINIGTIG…QVDSYIPTPT (205 aa). Residues 19-26 form a G1 region; that stretch reads GHVDHGKT. 19–26 serves as a coordination point for GTP; it reads GHVDHGKT. Thr-26 is a binding site for Mg(2+). Position 57 is an N6-methyllysine (Lys-57). A G2 region spans residues 60 to 64; sequence GITIN. Residues 81–84 form a G3 region; sequence DCPG. GTP contacts are provided by residues 81–85 and 136–139; these read DCPGH and NKED. The interval 136 to 139 is G4; sequence NKED. The tract at residues 174-176 is G5; the sequence is SAL.

The protein belongs to the TRAFAC class translation factor GTPase superfamily. Classic translation factor GTPase family. EF-Tu/EF-1A subfamily.

Its subcellular location is the plastid. It is found in the chloroplast. It carries out the reaction GTP + H2O = GDP + phosphate + H(+). In terms of biological role, GTP hydrolase that promotes the GTP-dependent binding of aminoacyl-tRNA to the A-site of ribosomes during protein biosynthesis. The sequence is that of Elongation factor Tu, chloroplastic (tufA) from Euglena gracilis.